We begin with the raw amino-acid sequence, 1512 residues long: Lysophospholipase NTE1 (1512 aa).

Residues 1–48 (MAAPDAMTSLVKSSVALLSSAHESLPTSLAAMKTAETAPSSTFGILGR) lie on the Cytoplasmic side of the membrane. Residues 49 to 69 (VILSILSVLPTLLFWVSYTLP) traverse the membrane as a helical segment. The Lumenal segment spans residues 70–83 (TWLFTLFSMSLTFT). A helical transmembrane segment spans residues 84 to 104 (MNFTTLMLVLVFVVSTISYFV). Over 105–1512 (RYRYLTMYAR…RTMAPRRASI (1408 aa)) the chain is Cytoplasmic. Disordered stretches follow at residues 204 to 230 (NREE…QAHR), 262 to 362 (RHDE…AHPD), 534 to 556 (TQMS…QHDV), and 740 to 770 (TEDD…KRSR). The segment covering 208-217 (SDSDEDDGEL) has biased composition (acidic residues). Residues 268-291 (GPSSSTPMSPQHRPSMTRNSSFNM) are compositionally biased toward polar residues. A compositionally biased stretch (basic residues) spans 343–358 (HSKQRRSPSRSTKPKS). Positions 537–549 (SRGTGRSGRSSFS) are enriched in low complexity. A nucleoside 3',5'-cyclic phosphate-binding positions include 669–793 (LSAS…SNRS) and 830–950 (RLTT…IASR). A compositionally biased stretch (polar residues) spans 751–761 (PTATNTSLRNG). A PNPLA domain is found at 1209 to 1373 (LVLGGGGARG…IDNLTVAHMK (165 aa)). Residues 1213–1218 (GGGARG) carry the GXGXXG motif. The GXSXG motif lies at 1240 to 1244 (GTSIG). Ser1242 serves as the catalytic Nucleophile. Asp1360 functions as the Proton acceptor in the catalytic mechanism. The DGA/G motif lies at 1360–1362 (DGG).

It belongs to the NTE family.

It localises to the endoplasmic reticulum membrane. The catalysed reaction is a 1-acyl-sn-glycero-3-phosphocholine + H2O = sn-glycerol 3-phosphocholine + a fatty acid + H(+). Its activity is regulated as follows. Inhibited by organophosphorus esters. Its function is as follows. Intracellular phospholipase B that catalyzes the double deacylation of phosphatidylcholine (PC) to glycerophosphocholine (GroPCho). Plays an important role in membrane lipid homeostasis. Responsible for the rapid PC turnover in response to inositol, elevated temperatures, or when choline is present in the growth medium. This is Lysophospholipase NTE1 (NTE1) from Phaeosphaeria nodorum (strain SN15 / ATCC MYA-4574 / FGSC 10173) (Glume blotch fungus).